A 1371-amino-acid chain; its full sequence is MALKKEQHFFKGMQRDLSVSKFNPEYAFDAQNIRITAREHDTLLSVSNEKGNKEIPLQSPSGDPVVIDGVLLGQNVLNNYVTLFTKGTNDNIYRLENKGTYFETLILFSGNLNFSTDYPIESISVYENNNIQKVYWVDGLNQARVINITKDDYNNADDFDFVGTIHTSSKIEVSKVNGSGAFGQGVIQYAFTYYNKYGKETNIFRTSPLLYIAYSDRGASPEETVSCSFQINFTELDSSYDFIRVYSIHRTSIDATPTVRKVADLATDTKLYVDTGTTGEIVDPTLLLYVGGEEIAPYTMTQKDNTLFLGNYTLKRSLISTELKNQIKSDSIVTTILGGLDDAIESEWNVNTQYNSNYDLNYDSRIKGFQKGEIYRLGIQFQDNKGKWSEVVFIGDYECTERFKYTQYDTYGITLIPRFKVVISNSTTIQAIKNLGYINARGVVVFPTLEDRNILCQGILCPTVANYKDRLDNSPFVQSSWFSRPKQATETWKTEYSGTNHLSEFGEVPYFQHNEPIGSASLSEITRWEIQTSLGLVPYYNPSTTNAKDFVDGSPSEFLVDENIVTMHSPDVEFDDRLQNITNGKFKLRIIGTTHLTNTLSDISVITSTPTYGNYATGFYKGKVANMNISTSYYGGRQLSAGLFWSDNVKFQDPSPQDKLERLWMVYPWHRNGSLMNMGVPTEGTRAAALQRKIISNLKFASQNNYLPNQSVWEAEISGDANHTGITPVNSWTEGLVRIPAQANSNLGSLNYYANIDKVLTFNRSEQISEIYKNGYLIYTTKDWITDGKIADLFNNAISQTISVDQVQDWLTRIADTDKYGTEPVSMKYKSNPHLVFAFNYTESGKQLILPMKNNNNGYLAPSANSKPFWNPTAPEGAVYQDSINFTNENRAFFWLAELYRDSVVNRFGGDTEEAILNNTWLPSGDSVIIGDSINIEYTEGDTYYQRYDCLRTFAYTNEDQNSIVDIVSFMCESKVNIDGRYDKNRGQVNNLAVSPTNFNLFNPVYSQKNNFFTFRTIDYERFSINYFPNSITVTKEKSLGEDIDTWTNITLATTLDLDGDKGEIVSLNTYNNEIFCFQRRGLSNILFNSRVQIPTSDGMPIEITNGLKVSGKRYISNTIGCANKWSIAESPSGLYFIDNETNSLYLFNGEIVSLSDKLGFRQWISTHNVHVNWEPVGYNNYRSFYDKNNNDVYFTYKDHCLCYSELINQFTSFMSYEGVPAMFNVSSEFYAFKDGKMWEQFAGDYNMFFGEYKPFSITFVANAEEPNDKIFNTVEFRADSWDSDNLISNKTFDTLDVWNEYQHGTTPLTNLLGHPSPLKKKFRIWRANIPRAIANNRDRIRNTWAYIKLGMNTPNTYRTEFHDAIIHYFA.

As to quaternary structure, homohexamer.

Its subcellular location is the virion. In terms of biological role, forms the muzzle assembly at the distal part of the tail. May serve as the gatekeeper to control the ejection of the cargo proteins. The protein is Muzzle protein of Bacteroides intestinalis (Bacteroides phage PhiCrAss001).